The sequence spans 453 residues: MERTCLAVILAAGDSTRMKSSKSKVLHPVAGRPMIAHVVEAVASAGISSVALVVGRDAEDVAKAASIAGVDIESFLQKERLGTGHAVLAAREAIAKGYDDILVTYGDVPLQTDGPLKAARQGLADGSDVVVIGFHTDRPTGYGRLLVKDGELIAIREEKDATDAERTVTWCNSGLMAINGRKALDLLSRIGNANAKGEFYLTDLVEIARSLGGRVTAVDAPEIEMTGCNTRAELAVIERFWQERRRHQMMLSGVTMIAPETVFLAYDTVIGQDALIEPNVVFGPGAVIDSGAVIHAFSHIEGAHVSQGATVGPFARLRPGADLGTGSKVGNFCEVKNGRLGEGAKVNHLTYIGDAVIGAGSNIGAGTITCNYDGVNKSETVIGENAFIGSNSSLVAPVTIGDGAYIASGSVITVNVPADALALGRARQEIKTGRATLLRERALAIKAAKKAKA.

The tract at residues 1–231 is pyrophosphorylase; the sequence is MERTCLAVIL…EIEMTGCNTR (231 aa). UDP-N-acetyl-alpha-D-glucosamine contacts are provided by residues 10–13, Lys24, Gln77, 82–83, 105–107, Gly143, Glu157, Asn172, and Asn229; these read LAAG, GT, and YGD. Position 107 (Asp107) interacts with Mg(2+). Asn229 is a binding site for Mg(2+). The linker stretch occupies residues 232–252; it reads AELAVIERFWQERRRHQMMLS. Residues 253 to 453 are N-acetyltransferase; it reads GVTMIAPETV…AIKAAKKAKA (201 aa). Positions 318 and 336 each coordinate UDP-N-acetyl-alpha-D-glucosamine. Residue His348 is the Proton acceptor of the active site. Tyr351 and Asn362 together coordinate UDP-N-acetyl-alpha-D-glucosamine. Residues Ala365, 371–372, Ser390, Ser408, and Arg425 contribute to the acetyl-CoA site; that span reads NY.

In the N-terminal section; belongs to the N-acetylglucosamine-1-phosphate uridyltransferase family. The protein in the C-terminal section; belongs to the transferase hexapeptide repeat family. Homotrimer. It depends on Mg(2+) as a cofactor.

It localises to the cytoplasm. The enzyme catalyses alpha-D-glucosamine 1-phosphate + acetyl-CoA = N-acetyl-alpha-D-glucosamine 1-phosphate + CoA + H(+). It carries out the reaction N-acetyl-alpha-D-glucosamine 1-phosphate + UTP + H(+) = UDP-N-acetyl-alpha-D-glucosamine + diphosphate. It functions in the pathway nucleotide-sugar biosynthesis; UDP-N-acetyl-alpha-D-glucosamine biosynthesis; N-acetyl-alpha-D-glucosamine 1-phosphate from alpha-D-glucosamine 6-phosphate (route II): step 2/2. It participates in nucleotide-sugar biosynthesis; UDP-N-acetyl-alpha-D-glucosamine biosynthesis; UDP-N-acetyl-alpha-D-glucosamine from N-acetyl-alpha-D-glucosamine 1-phosphate: step 1/1. Its pathway is bacterial outer membrane biogenesis; LPS lipid A biosynthesis. Catalyzes the last two sequential reactions in the de novo biosynthetic pathway for UDP-N-acetylglucosamine (UDP-GlcNAc). The C-terminal domain catalyzes the transfer of acetyl group from acetyl coenzyme A to glucosamine-1-phosphate (GlcN-1-P) to produce N-acetylglucosamine-1-phosphate (GlcNAc-1-P), which is converted into UDP-GlcNAc by the transfer of uridine 5-monophosphate (from uridine 5-triphosphate), a reaction catalyzed by the N-terminal domain. The protein is Bifunctional protein GlmU of Rhizobium johnstonii (strain DSM 114642 / LMG 32736 / 3841) (Rhizobium leguminosarum bv. viciae).